The chain runs to 153 residues: SsrA-binding protein (153 aa).

It belongs to the SmpB family.

It localises to the cytoplasm. Required for rescue of stalled ribosomes mediated by trans-translation. Binds to transfer-messenger RNA (tmRNA), required for stable association of tmRNA with ribosomes. tmRNA and SmpB together mimic tRNA shape, replacing the anticodon stem-loop with SmpB. tmRNA is encoded by the ssrA gene; the 2 termini fold to resemble tRNA(Ala) and it encodes a 'tag peptide', a short internal open reading frame. During trans-translation Ala-aminoacylated tmRNA acts like a tRNA, entering the A-site of stalled ribosomes, displacing the stalled mRNA. The ribosome then switches to translate the ORF on the tmRNA; the nascent peptide is terminated with the 'tag peptide' encoded by the tmRNA and targeted for degradation. The ribosome is freed to recommence translation, which seems to be the essential function of trans-translation. The sequence is that of SsrA-binding protein from Lactobacillus delbrueckii subsp. bulgaricus (strain ATCC 11842 / DSM 20081 / BCRC 10696 / JCM 1002 / NBRC 13953 / NCIMB 11778 / NCTC 12712 / WDCM 00102 / Lb 14).